Consider the following 225-residue polypeptide: tRNA (guanine-N(1)-)-methyltransferase (225 aa).

S-adenosyl-L-methionine contacts are provided by residues Gly112 and 132–137; that span reads IGDYVL.

This sequence belongs to the RNA methyltransferase TrmD family. Homodimer.

The protein resides in the cytoplasm. It catalyses the reaction guanosine(37) in tRNA + S-adenosyl-L-methionine = N(1)-methylguanosine(37) in tRNA + S-adenosyl-L-homocysteine + H(+). In terms of biological role, specifically methylates guanosine-37 in various tRNAs. This chain is tRNA (guanine-N(1)-)-methyltransferase, found in Flavobacterium psychrophilum (strain ATCC 49511 / DSM 21280 / CIP 103535 / JIP02/86).